We begin with the raw amino-acid sequence, 341 residues long: L-threonine 3-dehydrogenase (341 aa).

Position 38 (cysteine 38) interacts with Zn(2+). Catalysis depends on charge relay system residues threonine 40 and histidine 43. 6 residues coordinate Zn(2+): histidine 63, glutamate 64, cysteine 93, cysteine 96, cysteine 99, and cysteine 107. NAD(+) is bound by residues isoleucine 175, aspartate 195, arginine 200, 262-264 (LGI), and 286-287 (IY).

Belongs to the zinc-containing alcohol dehydrogenase family. Homotetramer. Requires Zn(2+) as cofactor.

The protein resides in the cytoplasm. It carries out the reaction L-threonine + NAD(+) = (2S)-2-amino-3-oxobutanoate + NADH + H(+). It functions in the pathway amino-acid degradation; L-threonine degradation via oxydo-reductase pathway; glycine from L-threonine: step 1/2. Its function is as follows. Catalyzes the NAD(+)-dependent oxidation of L-threonine to 2-amino-3-ketobutyrate. The chain is L-threonine 3-dehydrogenase from Alteromonas mediterranea (strain DSM 17117 / CIP 110805 / LMG 28347 / Deep ecotype).